Here is a 286-residue protein sequence, read N- to C-terminus: MPAATVDHSQRICEVWACNLEEEMKRIRQVTRKFNYIAMDTEFPGVVARPIGEFRSNADYQYQLLRCNVDLLKIIQLGLTFMNEQGEYPPGTSTWQFNFKFNLTEDMYAQDSIELLTSSGIQFKKHEEEGIETMYFAELLMTSGVVLCEGVKWLSFHSGYDFGYLIKILSNSKLPDEEVDFFEILRLFFPIIYDVKYLMKSCKNLKGGLQEVAEQLELERIGPQHQAGSDSLLTGMAFFKMREMFFEDHIDDAKYCGHLYGLGSGSSYVQNGTGNAYEEEANKQQS.

Residues Asp-40, Glu-42, Asp-161, Asp-230, and Glu-278 each contribute to the a divalent metal cation site.

It belongs to the CAF1 family. As to quaternary structure, component of the CCR4-NOT complex. Mn(2+) is required as a cofactor. Mg(2+) serves as cofactor. Requires Co(2+) as cofactor.

The protein resides in the nucleus. It localises to the cytoplasm. The catalysed reaction is Exonucleolytic cleavage of poly(A) to 5'-AMP.. Functionally, has 3'-5' poly(A) exoribonuclease activity for synthetic poly(A) RNA substrate. Catalytic component of the CCR4-NOT complex which is one of the major cellular mRNA deadenylases and is linked to various cellular processes including bulk mRNA degradation, miRNA-mediated repression, translational repression during translational initiation and general transcription regulation. During miRNA-mediated repression the complex also seems to act as translational repressor during translational initiation. Additional complex functions may be a consequence of its influence on mRNA expression. This Danio rerio (Zebrafish) protein is CCR4-NOT transcription complex subunit 7 (cnot7).